The chain runs to 380 residues: MRIGIVAGELSGDQLGGTLVEALKQKYPNAIIEGIGGPKMAAAGFKSLYPMDALSLIGFLEIISKGLRILSIRRKIINYFKQNKPDIFIGIDAPDFNLTVEKELRSVGIKTIHYVSPKIWVWREYRIKKIRKATDKILAILPFETEYYKNRHKFEAIYVGHPLAKNIPIHIDRTKYRDKLGLKGNSLPILSVLPGSRTTEVSRLLPLFLLALQKLVDAGYKFKAIMPLAKPSLKPLFAKYKEQIDSLGIEVFETNSHDVLKASDLSLLASGTATLEAMLCKLPMVVGYKLSWLSALIGRMLIGNHSYWAFPNILHKSEIIKELIQEDCTVDNLFSELKRLFDDKQRNDYIVEEFEKIHKEMVIDTESKIIQVLNTMIEKS.

This sequence belongs to the LpxB family.

The catalysed reaction is a lipid X + a UDP-2-N,3-O-bis[(3R)-3-hydroxyacyl]-alpha-D-glucosamine = a lipid A disaccharide + UDP + H(+). Its pathway is bacterial outer membrane biogenesis; LPS lipid A biosynthesis. Condensation of UDP-2,3-diacylglucosamine and 2,3-diacylglucosamine-1-phosphate to form lipid A disaccharide, a precursor of lipid A, a phosphorylated glycolipid that anchors the lipopolysaccharide to the outer membrane of the cell. This is Lipid-A-disaccharide synthase from Francisella tularensis subsp. novicida (strain U112).